The sequence spans 370 residues: DNA repair protein RAD51 homolog 2 (370 aa).

An ATP-binding site is contributed by 109–116 (GPPGIGKS).

The protein belongs to the RecA family. RAD51 subfamily. In terms of tissue distribution, preferentially expressed in flower buds and roots.

It localises to the nucleus. Functionally, may be involved in the homologous recombination repair (HRR) pathway of double-stranded DNA breaks arising during DNA replication or induced by DNA-damaging agents. The polypeptide is DNA repair protein RAD51 homolog 2 (RAD51B) (Arabidopsis thaliana (Mouse-ear cress)).